Consider the following 188-residue polypeptide: Putative glutamine amidotransferase-like protein YvdE homolog (188 aa).

Residues 17-188 (SPFWWNKVSY…IKDLGQGLQA (172 aa)) form the Glutamine amidotransferase type-1 domain.

The sequence is that of Putative glutamine amidotransferase-like protein YvdE homolog from Lactococcus lactis subsp. cremoris (Streptococcus cremoris).